Consider the following 86-residue polypeptide: Apolipoprotein C-I (86 aa).

The signal sequence occupies residues 1–26; sequence MRLFLSLPVLVVVLLMILEGPGPAQG.

Belongs to the apolipoprotein C1 family.

The protein resides in the secreted. In terms of biological role, inhibitor of lipoprotein binding to the low density lipoprotein (LDL) receptor, LDL receptor-related protein, and very low density lipoprotein (VLDL) receptor. Associates with high density lipoproteins (HDL) and the triacylglycerol-rich lipoproteins in the plasma and makes up about 10% of the protein of the VLDL and 2% of that of HDL. Appears to interfere directly with fatty acid uptake and is also the major plasma inhibitor of cholesteryl ester transfer protein (CETP). Binds free fatty acids and reduces their intracellular esterification. Modulates the interaction of APOE with beta-migrating VLDL and inhibits binding of beta-VLDL to the LDL receptor-related protein. In Saimiri boliviensis boliviensis (Bolivian squirrel monkey), this protein is Apolipoprotein C-I (APOC1).